Consider the following 149-residue polypeptide: Probable flagellum biosynthesis repressor protein FlbT (149 aa).

Belongs to the FlbT family.

Its function is as follows. Has a post-transcriptional repressor function in flagellum biogenesis. Associates with the 5'-UTR of fljK mRNA and promotes its degradation. In Rhizobium johnstonii (strain DSM 114642 / LMG 32736 / 3841) (Rhizobium leguminosarum bv. viciae), this protein is Probable flagellum biosynthesis repressor protein FlbT.